A 361-amino-acid polypeptide reads, in one-letter code: Outer membrane protein P2 (361 aa).

Positions 1–20 (MKKTLAALIVGAFAASAANA) are cleaved as a signal peptide.

This sequence belongs to the Gram-negative porin family. As to quaternary structure, homotrimer.

Its subcellular location is the cell outer membrane. In terms of biological role, forms pores that allow passive diffusion of small molecules across the outer membrane. The protein is Outer membrane protein P2 (ompP2) of Haemophilus influenzae.